The following is a 179-amino-acid chain: UPF0227 protein Sbal195_2522 (179 aa).

The protein belongs to the UPF0227 family.

The chain is UPF0227 protein Sbal195_2522 from Shewanella baltica (strain OS195).